A 328-amino-acid polypeptide reads, in one-letter code: L-serine dehydratase/L-threonine deaminase (328 aa).

K41 is subject to N6-(pyridoxal phosphate)lysine. P128 lines the pyridoxal 5'-phosphate pocket.

The protein belongs to the serine/threonine dehydratase family. Homodimer. The cofactor is pyridoxal 5'-phosphate. In terms of tissue distribution, predominantly expressed in the perivenous regions of the liver.

It localises to the cytoplasm. The enzyme catalyses L-serine = pyruvate + NH4(+). It carries out the reaction L-threonine = 2-oxobutanoate + NH4(+). It functions in the pathway carbohydrate biosynthesis; gluconeogenesis. Catalyzes the pyridoxal-phosphate-dependent dehydrative deamination of L-threonine and L-serine to ammonia and alpha-ketobutyrate and pyruvate, respectively. The polypeptide is L-serine dehydratase/L-threonine deaminase (SDS) (Homo sapiens (Human)).